The primary structure comprises 319 residues: Probable metallo-hydrolase YqjP (319 aa).

His67, His69, Asp71, His72, His165, Asp184, and His231 together coordinate Zn(2+).

Belongs to the metallo-beta-lactamase superfamily. Zn(2+) serves as cofactor.

The protein is Probable metallo-hydrolase YqjP (yqjP) of Bacillus subtilis (strain 168).